The following is a 101-amino-acid chain: Small ribosomal subunit protein uS10 (101 aa).

Belongs to the universal ribosomal protein uS10 family. As to quaternary structure, part of the 30S ribosomal subunit.

Involved in the binding of tRNA to the ribosomes. The sequence is that of Small ribosomal subunit protein uS10 from Mycobacterium leprae (strain Br4923).